A 564-amino-acid chain; its full sequence is Formate--tetrahydrofolate ligase (564 aa).

ATP is bound at residue 65–72 (TPLGEGKT).

The protein belongs to the formate--tetrahydrofolate ligase family.

The enzyme catalyses (6S)-5,6,7,8-tetrahydrofolate + formate + ATP = (6R)-10-formyltetrahydrofolate + ADP + phosphate. It functions in the pathway one-carbon metabolism; tetrahydrofolate interconversion. The protein is Formate--tetrahydrofolate ligase of Roseiflexus sp. (strain RS-1).